The primary structure comprises 140 residues: Probable disulfide formation protein C 2 (140 aa).

The helical transmembrane segment at 6 to 25 (KYHIAIAWTIATSAMLISLI) threads the bilayer. Cysteine 35 and cysteine 38 are joined by a disulfide. The next 2 membrane-spanning stretches (helical) occupy residues 40 to 59 (YQRMAMYPLVLILGIGMYRK) and 66 to 83 (YAFPFACIGLIISVYQIT). Cysteine 95 and cysteine 101 are joined by a disulfide. The chain crosses the membrane as a helical span at residues 110 to 134 (GFISIPMLSFVGFLAIIILLYINQI).

The protein belongs to the DsbB family. BdbC subfamily.

It localises to the cell membrane. Functionally, required for disulfide bond formation in some proteins. This is Probable disulfide formation protein C 2 (bdbC2) from Bacillus anthracis.